A 209-amino-acid polypeptide reads, in one-letter code: Transmembrane protein 52 (209 aa).

Positions 1 to 32 (MARGPLAARGLRLLLPLLPLLPLLPLPQVALG) are cleaved as a signal peptide. The chain crosses the membrane as a helical span at residues 56–76 (VGLILLAVLLLLLCGVTAGCV). Residues 145–209 (AYSLYTPEPP…QLPPCSPGAP (65 aa)) are disordered. A compositionally biased stretch (basic and acidic residues) spans 159–170 (EAVKMAKPREEG). The segment covering 186–202 (LETTPVPQESGPNTQLP) has biased composition (polar residues).

The protein resides in the membrane. The chain is Transmembrane protein 52 (TMEM52) from Homo sapiens (Human).